The following is a 79-amino-acid chain: Conotoxin 1 (79 aa).

The N-terminal stretch at 1–22 (MKLTCVLIITVLFLTASQLITA) is a signal peptide. A propeptide spanning residues 23 to 46 (DYSRDQRQYRAVRLGDEMRTFKGA) is cleaved from the precursor. 3 disulfides stabilise this stretch: C49/C62, C56/C67, and C61/C77.

The protein belongs to the conotoxin O1 superfamily. As to expression, expressed by the venom duct.

It localises to the secreted. The protein is Conotoxin 1 of Conus vexillum (Flag cone).